A 146-amino-acid polypeptide reads, in one-letter code: MALYEHIYLARQDVSAQQVETLTEQFRGIIESLGGKIEKVEYWGVKTLAYRIKKNRKAHFTLLNIDAPAAAITEMERQSSLNEDVLRLLTIRVEALEAGQSAMMRKRDDDDRGDRPDRGDRGRGPRPDRPPRRPRDDAAASDEGGF.

The interval 100–146 (QSAMMRKRDDDDRGDRPDRGDRGRGPRPDRPPRRPRDDAAASDEGGF) is disordered. Over residues 105–138 (RKRDDDDRGDRPDRGDRGRGPRPDRPPRRPRDDA) the composition is skewed to basic and acidic residues.

This sequence belongs to the bacterial ribosomal protein bS6 family.

Functionally, binds together with bS18 to 16S ribosomal RNA. In Methylocella silvestris (strain DSM 15510 / CIP 108128 / LMG 27833 / NCIMB 13906 / BL2), this protein is Small ribosomal subunit protein bS6.